A 322-amino-acid polypeptide reads, in one-letter code: Hapalindole dimethylallyltransferase (322 aa).

Residues R46, R60, K115, N166, Y168, R221, Y225, and K275 each coordinate dimethylallyl diphosphate.

This sequence belongs to the aromatic prenyltransferase family.

The enzyme catalyses hapalindole G + dimethylallyl diphosphate = ambiguine A + diphosphate. It carries out the reaction hapalindole U + dimethylallyl diphosphate + H(+) = ambiguine H + diphosphate. With respect to regulation, activity is slightly increased in the presence of Mg(2+). In terms of biological role, prenyltransferase involved in the biosynthesis of ambiguines, a family of hapalindole-type alkaloids. Catalyzes the reverse prenylation of hapalindole G or U at the C2 position with dimethylallyl diphosphate (DMAPP) to generate ambiguine A or H, respectively. In addition, accepts hapalindole A, an epimer of hapalindole G, and catalyzes normal prenylation at its C2 position. The sequence is that of Hapalindole dimethylallyltransferase from Fischerella ambigua (strain UTEX 1903).